The chain runs to 378 residues: Queuine tRNA-ribosyltransferase (378 aa).

Asp93 serves as the catalytic Proton acceptor. Substrate is bound by residues 93-97, Asp147, Gln189, and Gly216; that span reads DSGGF. The segment at 247–253 is RNA binding; that stretch reads GVGTFRE. The active-site Nucleophile is the Asp266. An RNA binding; important for wobble base 34 recognition region spans residues 271-275; the sequence is TRVAR. Positions 308, 310, 313, and 339 each coordinate Zn(2+).

Belongs to the queuine tRNA-ribosyltransferase family. As to quaternary structure, homodimer. Within each dimer, one monomer is responsible for RNA recognition and catalysis, while the other monomer binds to the replacement base PreQ1. Zn(2+) serves as cofactor.

The enzyme catalyses 7-aminomethyl-7-carbaguanine + guanosine(34) in tRNA = 7-aminomethyl-7-carbaguanosine(34) in tRNA + guanine. Its pathway is tRNA modification; tRNA-queuosine biosynthesis. Functionally, catalyzes the base-exchange of a guanine (G) residue with the queuine precursor 7-aminomethyl-7-deazaguanine (PreQ1) at position 34 (anticodon wobble position) in tRNAs with GU(N) anticodons (tRNA-Asp, -Asn, -His and -Tyr). Catalysis occurs through a double-displacement mechanism. The nucleophile active site attacks the C1' of nucleotide 34 to detach the guanine base from the RNA, forming a covalent enzyme-RNA intermediate. The proton acceptor active site deprotonates the incoming PreQ1, allowing a nucleophilic attack on the C1' of the ribose to form the product. After dissociation, two additional enzymatic reactions on the tRNA convert PreQ1 to queuine (Q), resulting in the hypermodified nucleoside queuosine (7-(((4,5-cis-dihydroxy-2-cyclopenten-1-yl)amino)methyl)-7-deazaguanosine). This Gloeobacter violaceus (strain ATCC 29082 / PCC 7421) protein is Queuine tRNA-ribosyltransferase.